The sequence spans 440 residues: Thymidine phosphorylase (440 aa).

Belongs to the thymidine/pyrimidine-nucleoside phosphorylase family. As to quaternary structure, homodimer.

It carries out the reaction thymidine + phosphate = 2-deoxy-alpha-D-ribose 1-phosphate + thymine. Its pathway is pyrimidine metabolism; dTMP biosynthesis via salvage pathway; dTMP from thymine: step 1/2. Functionally, the enzymes which catalyze the reversible phosphorolysis of pyrimidine nucleosides are involved in the degradation of these compounds and in their utilization as carbon and energy sources, or in the rescue of pyrimidine bases for nucleotide synthesis. The protein is Thymidine phosphorylase of Klebsiella pneumoniae (strain 342).